An 88-amino-acid polypeptide reads, in one-letter code: Cuticle protein 70, isoforms A and B (88 aa).

5 consecutive repeat copies span residues 7 to 10 (AAPA), 48 to 51 (AAPA), 55 to 58 (AAVP), 60 to 63 (AAPV), and 66 to 69 (AAPV).

Its function is as follows. Component of the cuticle of migratory locust which contains more than 100 different structural proteins. The protein is Cuticle protein 70, isoforms A and B of Locusta migratoria (Migratory locust).